The primary structure comprises 20 residues: Large ribosomal subunit protein bL31 (20 aa).

2 residues coordinate Zn(2+): residue 16 and residue 18.

It belongs to the bacterial ribosomal protein bL31 family. Type A subfamily. As to quaternary structure, part of the 50S ribosomal subunit. Requires Zn(2+) as cofactor.

Binds the 23S rRNA. The chain is Large ribosomal subunit protein bL31 (rpmE) from Ectopseudomonas mendocina (Pseudomonas mendocina).